Reading from the N-terminus, the 363-residue chain is Strychnine O-methyltransferase (363 aa).

Residues Gly-204, Asp-227, Asp-249, Met-250, and Lys-263 each coordinate S-adenosyl-L-methionine. His-267 functions as the Proton acceptor in the catalytic mechanism.

Belongs to the class I-like SAM-binding methyltransferase superfamily. Cation-independent O-methyltransferase family.

The enzyme catalyses 10-hydroxystrychnine + S-adenosyl-L-methionine = beta-colubrine + S-adenosyl-L-homocysteine + H(+). It carries out the reaction 11-demethylbrucine + S-adenosyl-L-methionine = brucine + S-adenosyl-L-homocysteine + H(+). The protein operates within alkaloid biosynthesis. In terms of biological role, O-methyltransferase involved in the biosynthesis of curare monoterpene indole alkaloids (MIAs), natural products such as strychnine, a neurotoxic compound used as a pesticide to control rodents, and its pharmacologically active derivatives, including brucine, used to regulate blood pressure. Curare alkaloids act as animal glycine receptor antagonists. Catalyzes the conversion of 10-OH strychnine to beta-colubrine, and of 11-deMe brucine to brucine. The polypeptide is Strychnine O-methyltransferase (Strychnos nux-vomica (Poison nut)).